We begin with the raw amino-acid sequence, 926 residues long: Alpha-aminoadipic semialdehyde synthase, mitochondrial (926 aa).

The transit peptide at 1–27 (MLRAQRLRLARLRACVSRGLHHKPVMA) directs the protein to the mitochondrion. Positions 28–455 (LRREDVNAWE…DAVITSNGLL (428 aa)) are lysine-ketoglutarate reductase. N6-acetyllysine occurs at positions 48, 52, and 56. Lys93 carries the N6-acetyllysine; alternate modification. N6-succinyllysine; alternate is present on Lys93. Lys128 is subject to N6-acetyllysine. Lys138 bears the N6-acetyllysine; alternate mark. Lys138 bears the N6-succinyllysine; alternate mark. Lys274 carries the post-translational modification N6-succinyllysine. Residue Lys286 is modified to N6-acetyllysine; alternate. An N6-succinyllysine; alternate modification is found at Lys286. Lys333 is subject to N6-succinyllysine. Residue Lys458 is modified to N6-acetyllysine; alternate. Lys458 carries the N6-succinyllysine; alternate modification. The interval 477–926 (MSTKKKVLVL…VFNTQSTIKL (450 aa)) is saccharopine dehydrogenase. NAD(+) is bound by residues Ser488, Asp512, and Gln516. 2 positions are modified to N6-acetyllysine; alternate: Lys523 and Lys535. N6-succinyllysine; alternate is present on residues Lys523 and Lys535. NAD(+)-binding residues include Leu554, Ala576, and Ser577. An L-saccharopine-binding site is contributed by 577–578 (SY). Lys584 bears the N6-acetyllysine; alternate mark. At Lys584 the chain carries N6-succinyllysine; alternate. NAD(+) contacts are provided by Leu603, Asp604, and Pro605. Asp604 contacts L-saccharopine. L-saccharopine is bound at residue Arg703. Position 707 is an N6-acetyllysine (Lys707). 724–726 (TLR) contacts L-saccharopine. Lys732 is modified (N6-succinyllysine). The residue at position 739 (Lys739) is an N6-acetyllysine. An N6-acetyllysine; alternate modification is found at Lys761. Residue Lys761 is modified to N6-succinyllysine; alternate. N6-acetyllysine occurs at positions 778 and 780.

It in the N-terminal section; belongs to the AlaDH/PNT family. This sequence in the C-terminal section; belongs to the saccharopine dehydrogenase family. Homotetramer.

Its subcellular location is the mitochondrion. The catalysed reaction is L-saccharopine + NADP(+) + H2O = L-lysine + 2-oxoglutarate + NADPH + H(+). It catalyses the reaction L-saccharopine + NAD(+) + H2O = (S)-2-amino-6-oxohexanoate + L-glutamate + NADH + H(+). It participates in amino-acid degradation; L-lysine degradation via saccharopine pathway; glutaryl-CoA from L-lysine: step 1/6. Its pathway is amino-acid degradation; L-lysine degradation via saccharopine pathway; glutaryl-CoA from L-lysine: step 2/6. In terms of biological role, bifunctional enzyme that catalyzes the first two steps in lysine degradation. The polypeptide is Alpha-aminoadipic semialdehyde synthase, mitochondrial (Rattus norvegicus (Rat)).